We begin with the raw amino-acid sequence, 386 residues long: Galactokinase (386 aa).

35-38 (EHTD) is a binding site for substrate. 125–131 (GAGLSSS) contributes to the ATP binding site. The Mg(2+) site is built by serine 131 and glutamate 163. Aspartate 175 (proton acceptor) is an active-site residue. Tyrosine 224 is a substrate binding site.

The protein belongs to the GHMP kinase family. GalK subfamily.

Its subcellular location is the cytoplasm. It catalyses the reaction alpha-D-galactose + ATP = alpha-D-galactose 1-phosphate + ADP + H(+). The protein operates within carbohydrate metabolism; galactose metabolism. Functionally, catalyzes the transfer of the gamma-phosphate of ATP to D-galactose to form alpha-D-galactose-1-phosphate (Gal-1-P). The chain is Galactokinase from Vibrio cholerae serotype O1 (strain ATCC 39315 / El Tor Inaba N16961).